The following is a 255-amino-acid chain: Adenosylcobinamide-GDP ribazoletransferase (255 aa).

The next 7 membrane-spanning stretches (helical) occupy residues 33–53, 57–77, 107–127, 136–156, 174–194, 196–216, and 234–254; these read IFLP…IELF, FPGF…SGAL, VGSM…GSYA, FTVL…IYSF, AGLI…AAFF, FSLI…FVVA, and IMEL…NIGV.

Belongs to the CobS family. Mg(2+) is required as a cofactor.

It is found in the cell membrane. The catalysed reaction is alpha-ribazole + adenosylcob(III)inamide-GDP = adenosylcob(III)alamin + GMP + H(+). It carries out the reaction alpha-ribazole 5'-phosphate + adenosylcob(III)inamide-GDP = adenosylcob(III)alamin 5'-phosphate + GMP + H(+). It participates in cofactor biosynthesis; adenosylcobalamin biosynthesis; adenosylcobalamin from cob(II)yrinate a,c-diamide: step 7/7. Functionally, joins adenosylcobinamide-GDP and alpha-ribazole to generate adenosylcobalamin (Ado-cobalamin). Also synthesizes adenosylcobalamin 5'-phosphate from adenosylcobinamide-GDP and alpha-ribazole 5'-phosphate. This Carboxydothermus hydrogenoformans (strain ATCC BAA-161 / DSM 6008 / Z-2901) protein is Adenosylcobinamide-GDP ribazoletransferase.